A 75-amino-acid chain; its full sequence is Small ribosomal subunit protein bS18 (75 aa).

The protein belongs to the bacterial ribosomal protein bS18 family. In terms of assembly, part of the 30S ribosomal subunit. Forms a tight heterodimer with protein bS6.

Its function is as follows. Binds as a heterodimer with protein bS6 to the central domain of the 16S rRNA, where it helps stabilize the platform of the 30S subunit. In Shewanella loihica (strain ATCC BAA-1088 / PV-4), this protein is Small ribosomal subunit protein bS18.